The primary structure comprises 181 residues: Large ribosomal subunit protein uL6 (181 aa).

This sequence belongs to the universal ribosomal protein uL6 family. As to quaternary structure, part of the 50S ribosomal subunit.

Functionally, this protein binds to the 23S rRNA, and is important in its secondary structure. It is located near the subunit interface in the base of the L7/L12 stalk, and near the tRNA binding site of the peptidyltransferase center. In Vesicomyosocius okutanii subsp. Calyptogena okutanii (strain HA), this protein is Large ribosomal subunit protein uL6.